Reading from the N-terminus, the 428-residue chain is Chaperone SurA (428 aa).

The signal sequence occupies residues 1–19 (MNIWKTLLLGMLVTGSAVS). PpiC domains lie at 170 to 268 (SVEY…KIED) and 277 to 377 (VTEV…EVLD).

Its subcellular location is the periplasm. The catalysed reaction is [protein]-peptidylproline (omega=180) = [protein]-peptidylproline (omega=0). Chaperone involved in the correct folding and assembly of outer membrane proteins. Recognizes specific patterns of aromatic residues and the orientation of their side chains, which are found more frequently in integral outer membrane proteins. May act in both early periplasmic and late outer membrane-associated steps of protein maturation. This chain is Chaperone SurA, found in Vibrio vulnificus (strain YJ016).